The following is a 546-amino-acid chain: (-)-5-epieremophilene synthase STPS3 (546 aa).

Residues D299, D303, D442, T446, and E450 each coordinate Mg(2+). The DDXXD motif motif lies at 299 to 303 (DDTYD).

The protein belongs to the terpene synthase family. Tpsa subfamily. As to quaternary structure, monomer. Requires Mg(2+) as cofactor. As to expression, highly expressed in flowers and at lower levels in leaves.

The enzyme catalyses (2E,6E)-farnesyl diphosphate = (-)-5-epi-eremophilene + diphosphate. The protein operates within secondary metabolite biosynthesis; terpenoid biosynthesis. Sesquiterpene synthase that catalyzes the conversion of farnesyl diphosphate to (-)-5-epi-eremophilene. The polypeptide is (-)-5-epieremophilene synthase STPS3 (Salvia miltiorrhiza (Chinese sage)).